We begin with the raw amino-acid sequence, 359 residues long: MWQCKNKSRWWYSLVPILCICIMCYGAIAYSYSFCYVEVWTHLGMKAAAIGMTCLHLIIVILLWIIWAQIIMMGPGRQPRVAPFMILPEMADAGERAKEGAATSVLPPDVYQCDTQGYPVWCSVCQSLKGLRTHHSVHLGFCVPRLDHYCVWLGTVIGRRNYRLFNQFLMCFLMHALIIFVSVVSLQRRIASSARMRGEREDPNVLVVLSLSCLVLLMVGALFISFLNYMANNQTTIEKLYTPKRQPRTMCFCVYNPADQYRYVVKSLPHENWNMWDKGSAYANYKDFLGSSIWRWFIPIGSNIPEFQTSAWEDDYNAILGPYKEELGSHYRDILMQRIEQGKYVTRLRVYGDKFREGL.

4 helical membrane passes run 10–30, 47–67, 164–184, and 206–226; these read WWYS…AIAY, AAAI…WIIW, LFNQ…VSVV, and LVVL…FISF. The DHHC domain occupies 120–170; that stretch reads VWCSVCQSLKGLRTHHSVHLGFCVPRLDHYCVWLGTVIGRRNYRLFNQFLM.

Belongs to the DHHC palmitoyltransferase family. PFA5 subfamily. Post-translationally, autopalmitoylated.

The protein resides in the membrane. It catalyses the reaction L-cysteinyl-[protein] + hexadecanoyl-CoA = S-hexadecanoyl-L-cysteinyl-[protein] + CoA. The polypeptide is Palmitoyltransferase PFA5 (PFA5) (Eremothecium gossypii (strain ATCC 10895 / CBS 109.51 / FGSC 9923 / NRRL Y-1056) (Yeast)).